Consider the following 107-residue polypeptide: Nucleoid-associated protein BT_0257 (107 aa).

Belongs to the YbaB/EbfC family. As to quaternary structure, homodimer.

The protein localises to the cytoplasm. It localises to the nucleoid. Its function is as follows. Binds to DNA and alters its conformation. May be involved in regulation of gene expression, nucleoid organization and DNA protection. This is Nucleoid-associated protein BT_0257 from Bartonella tribocorum (strain CIP 105476 / IBS 506).